The primary structure comprises 756 residues: 5-methyltetrahydropteroyltriglutamate--homocysteine methyltransferase (756 aa).

Residues 16-19 (RELK) and K116 contribute to the 5-methyltetrahydropteroyltri-L-glutamate site. Residues 433-435 (IGS) and E486 each bind L-homocysteine. Residues 433 to 435 (IGS) and E486 each bind L-methionine. Residues 517-518 (RC) and W563 each bind 5-methyltetrahydropteroyltri-L-glutamate. An L-homocysteine-binding site is contributed by D601. L-methionine is bound at residue D601. Position 607 (E607) interacts with 5-methyltetrahydropteroyltri-L-glutamate. Zn(2+) is bound by residues H643, C645, and E667. H696 serves as the catalytic Proton donor. C728 serves as a coordination point for Zn(2+).

Belongs to the vitamin-B12 independent methionine synthase family. It depends on Zn(2+) as a cofactor.

It catalyses the reaction 5-methyltetrahydropteroyltri-L-glutamate + L-homocysteine = tetrahydropteroyltri-L-glutamate + L-methionine. It functions in the pathway amino-acid biosynthesis; L-methionine biosynthesis via de novo pathway; L-methionine from L-homocysteine (MetE route): step 1/1. In terms of biological role, catalyzes the transfer of a methyl group from 5-methyltetrahydrofolate to homocysteine resulting in methionine formation. The chain is 5-methyltetrahydropteroyltriglutamate--homocysteine methyltransferase from Buchnera aphidicola subsp. Baizongia pistaciae (strain Bp).